Here is a 138-residue protein sequence, read N- to C-terminus: DNA-directed RNA polymerase subunit omega (138 aa).

The disordered stretch occupies residues 101–138; the sequence is AEDDDTLEADGLTIHDGADSDLDLSDDAGQDTDEADED. Acidic residues predominate over residues 119 to 138; that stretch reads DSDLDLSDDAGQDTDEADED.

The protein belongs to the RNA polymerase subunit omega family. In terms of assembly, the RNAP catalytic core consists of 2 alpha, 1 beta, 1 beta' and 1 omega subunit. When a sigma factor is associated with the core the holoenzyme is formed, which can initiate transcription.

It catalyses the reaction RNA(n) + a ribonucleoside 5'-triphosphate = RNA(n+1) + diphosphate. Functionally, promotes RNA polymerase assembly. Latches the N- and C-terminal regions of the beta' subunit thereby facilitating its interaction with the beta and alpha subunits. The protein is DNA-directed RNA polymerase subunit omega of Rhodospirillum rubrum (strain ATCC 11170 / ATH 1.1.1 / DSM 467 / LMG 4362 / NCIMB 8255 / S1).